The chain runs to 96 residues: Cathelin (96 aa).

A Pyrrolidone carboxylic acid modification is found at Q1. The segment at 31-50 is disordered; the sequence is DQPPKADEDPGTPKPVSFTV. 2 disulfides stabilise this stretch: C55-C66 and C73-C90.

The protein belongs to the cathelicidin family.

It localises to the secreted. Functionally, probably a microbicidal peptide. This chain is Cathelin, found in Sus scrofa (Pig).